The sequence spans 123 residues: Testis-expressed protein 12 (123 aa).

The segment at 1–41 (MMANHLVKPDSRNCKRARELEPQVSDSPQVSSLGKSESSLS) is disordered. A compositionally biased stretch (basic and acidic residues) spans 7–21 (VKPDSRNCKRARELE). Low complexity predominate over residues 31 to 41 (SSLGKSESSLS).

As to quaternary structure, interacts with SYCE2. As to expression, testis (at protein level). Detected in ovary. Expressed in both male and female germ cells.

It is found in the chromosome. Component of the transverse central element of synaptonemal complexes (SCS), formed between homologous chromosomes during meiotic prophase. Requires SYCP1 in order to be incorporated into the central element. The chain is Testis-expressed protein 12 (Tex12) from Mus musculus (Mouse).